We begin with the raw amino-acid sequence, 57 residues long: Large ribosomal subunit protein bL32 (57 aa).

Belongs to the bacterial ribosomal protein bL32 family.

This Geobacillus sp. (strain WCH70) protein is Large ribosomal subunit protein bL32.